The sequence spans 262 residues: Putative ankyrin repeat protein R848 (262 aa).

7 ANK repeats span residues 8–37 (SNDY…NVTH), 38–67 (DNNY…DIRD), 68–97 (CRDY…NIRA), 99–127 (DDYA…NFRA), 128–157 (DNDY…DIRA), 159–187 (DDYA…DFRS), and 189–217 (NNAS…DVNT).

The polypeptide is Putative ankyrin repeat protein R848 (Acanthamoeba polyphaga (Amoeba)).